Here is a 484-residue protein sequence, read N- to C-terminus: Arachin Ahy-3 (484 aa).

The signal sequence occupies residues 1–20; the sequence is MAKLLALSVCFCFLVLGASS. 2 disulfide bridges follow: Cys-32–Cys-65 and Cys-108–Cys-305. Residues 35 to 253 enclose the Cupin type-1 1 domain; that stretch reads QRLNAQRPDN…GFQVNEDIVR (219 aa). Residues 208–233 form a disordered region; it reads QQRSGRQSPKGEEQEQEQENEGGNVF. Residues 295-298 constitute a propeptide that is removed on maturation; it reads DFNN. The Cupin type-1 2 domain maps to 311–460; the sequence is MNIGKSTSAD…SYGLQYEQAR (150 aa). A propeptide spanning residues 479–484 is cleaved from the precursor; the sequence is MIRTVA.

The protein belongs to the 11S seed storage protein (globulins) family. As to quaternary structure, hexamer; each subunit is composed of an acidic and a basic chain derived from a single precursor and linked by a disulfide bond.

This chain is Arachin Ahy-3, found in Arachis hypogaea (Peanut).